Consider the following 505-residue polypeptide: ATP synthase subunit alpha (505 aa).

170–177 (GDRQTGKT) contributes to the ATP binding site.

The protein belongs to the ATPase alpha/beta chains family. In terms of assembly, F-type ATPases have 2 components, CF(1) - the catalytic core - and CF(0) - the membrane proton channel. CF(1) has five subunits: alpha(3), beta(3), gamma(1), delta(1), epsilon(1). CF(0) has four main subunits: a(1), b(1), b'(1) and c(9-12).

Its subcellular location is the cellular thylakoid membrane. The enzyme catalyses ATP + H2O + 4 H(+)(in) = ADP + phosphate + 5 H(+)(out). Its function is as follows. Produces ATP from ADP in the presence of a proton gradient across the membrane. The alpha chain is a regulatory subunit. The chain is ATP synthase subunit alpha from Prochlorococcus marinus (strain MIT 9303).